The sequence spans 328 residues: Probable magnesium transporter NIPA6 (328 aa).

Residues 1-4 (METD) are Extracellular-facing. A helical transmembrane segment spans residues 5–25 (NGKGLILAVASSVFIGSSFIL). At 26–51 (KKKGLKRAGAIGTRAGYGGYTYLLEP) the chain is on the cytoplasmic side. Residues 52 to 72 (LWWAGMVTMIVGEAANFVAYI) traverse the membrane as a helical segment. Topologically, residues 73–76 (YAPA) are extracellular. A helical transmembrane segment spans residues 77–97 (VLVTPLGALSIIISAVLAHFL). The Cytoplasmic portion of the chain corresponds to 98–104 (LKEKLKK). Residues 105–125 (MGVLGCVSCIVGSVVIVIHAP) traverse the membrane as a helical segment. Residues 126–142 (KEQTPNSVEEIWNLATQ) are Extracellular-facing. Residues 143 to 163 (PAFLIYVAITMSIVLALILHF) traverse the membrane as a helical segment. The Cytoplasmic portion of the chain corresponds to 164-175 (EPLCGQTNILVY). The chain crosses the membrane as a helical span at residues 176 to 196 (IGICSLMGALTVMSIKAIGIA). Topologically, residues 197–209 (IKLTMEGVSQIGY) are extracellular. The chain crosses the membrane as a helical span at residues 210–230 (PQTWLFVMVAVTCVVTQLIYL). Residues 231–240 (NKALDTFNAA) lie on the Cytoplasmic side of the membrane. A helical transmembrane segment spans residues 241–261 (IVSPVYYVMFTTLTIVASAIM). The Extracellular portion of the chain corresponds to 262–269 (FKDWSGQD). Residues 270–290 (AASVASELCGFITVLTGTMIL) traverse the membrane as a helical segment. Residues 291 to 328 (HGTREEEQQQASSEHVRWYDSRKSMNEEHLVSLYSPEY) are Cytoplasmic-facing.

It belongs to the NIPA (TC 2.A.7) family. In terms of assembly, homodimer.

The protein localises to the cell membrane. It is found in the early endosome. In terms of biological role, acts as a Mg(2+) transporter. Can also transport other divalent cations such as Fe(2+), Sr(2+), Ba(2+), Mn(2+) and Co(2+) but to a much less extent than Mg(2+). This Arabidopsis thaliana (Mouse-ear cress) protein is Probable magnesium transporter NIPA6.